Reading from the N-terminus, the 716-residue chain is Putative cuticle collagen 99 (716 aa).

2 disordered regions span residues 85 to 122 (LPSS…PVGP) and 183 to 472 (PPGP…SLVA). Triple-helical region stretches follow at residues 179–238 (GMPG…KGDR), 265–298 (LPGP…FDGE), and 302–330 (GPKG…EKGD). Residues 266 to 277 (PGPPGPPGPPGP) show a composition bias toward pro residues. Over residues 280-290 (RDGRHGLKGDR) the composition is skewed to basic and acidic residues. Pro residues predominate over residues 349-358 (PGPPGPPGPP). Triple-helical region regions lie at residues 385-411 (GPPG…AGAA) and 422-467 (GPPG…GRHG). A compositionally biased stretch (basic and acidic residues) spans 389–401 (EKGERGERGEPGD). Positions 402-422 (RGLPGAAGAANLLNGGKALVG) are enriched in low complexity. The segment covering 429-444 (RDGRPGDKGEKGEQGL) has biased composition (basic and acidic residues). N-linked (GlcNAc...) asparagine glycosylation is present at asparagine 474. Residues 503–716 (KNVIPGPPGP…GAETRPPVTD (214 aa)) are disordered. 3 triple-helical region regions span residues 507 to 557 (PGPP…QPGA), 566 to 603 (GPRG…PPGP), and 605 to 664 (GLRG…PGLD). A compositionally biased stretch (pro residues) spans 568–577 (RGPPGLPGPP).

This sequence belongs to the cuticular collagen family. Collagen polypeptide chains are complexed within the cuticle by disulfide bonds and other types of covalent cross-links.

Its function is as follows. Nematode cuticles are composed largely of collagen-like proteins. The cuticle functions both as an exoskeleton and as a barrier to protect the worm from its environment. The protein is Putative cuticle collagen 99 (col-99) of Caenorhabditis elegans.